A 475-amino-acid chain; its full sequence is UDP-N-acetylmuramate--L-alanine ligase (475 aa).

ATP is bound at residue 121–127 (GTHGKTT).

Belongs to the MurCDEF family.

It is found in the cytoplasm. It carries out the reaction UDP-N-acetyl-alpha-D-muramate + L-alanine + ATP = UDP-N-acetyl-alpha-D-muramoyl-L-alanine + ADP + phosphate + H(+). The protein operates within cell wall biogenesis; peptidoglycan biosynthesis. Its function is as follows. Cell wall formation. This is UDP-N-acetylmuramate--L-alanine ligase from Salinibacter ruber (strain DSM 13855 / M31).